The sequence spans 308 residues: MEEANNKESPYISSILPGWFSEISPLWPGEAHSLKVEKILFQGKSDYQNVMVFQSSTYGKVLILDGVIQLTERDECAYQEMITHLPLCSIPNPKKVLVIGGGDGGVLREVSRHSSVEQIDICEIDKMVIDVSKQFFPNVAIGYEDPRVKLHVGDGVAFLKFVAEGTYDAVIVDSSDPIGPAQELFEKPFFESVARALRPGGVVCTQAESIWLHMHIIEDIVANCRQIFKGSVNYAWTTVPTYPSGVIGFMLCSTEGPAVDFKNPINPVDADDSHTKTRGPLKFYNSEIHSASFCLPSFAKRVIESKGK.

Residues 17 to 254 (PGWFSEISPL…GVIGFMLCST (238 aa)) enclose the PABS domain. S-adenosyl 3-(methylsulfanyl)propylamine is bound at residue glutamine 48. Position 78 (tyrosine 78) interacts with putrescine. S-adenosyl 3-(methylsulfanyl)propylamine contacts are provided by residues glutamine 79, aspartate 103, glutamate 123, 154–155 (DG), and aspartate 173. Aspartate 173 (proton acceptor) is an active-site residue. Putrescine contacts are provided by residues 173–176 (DSSD) and tyrosine 242.

This sequence belongs to the spermidine/spermine synthase family.

The enzyme catalyses S-adenosyl 3-(methylsulfanyl)propylamine + putrescine = S-methyl-5'-thioadenosine + spermidine + H(+). It functions in the pathway amine and polyamine biosynthesis; spermidine biosynthesis; spermidine from putrescine: step 1/1. The chain is Spermidine synthase 1 from Datura stramonium (Jimsonweed).